Here is a 586-residue protein sequence, read N- to C-terminus: Clathrin heavy chain linker domain-containing protein 1 (586 aa).

Positions 174–232 (MNLDALTKYMKHLEDKYAEIKQAMLIKYVPAQRKSDLDEEMIVLLKRRDVAENLNRKLQ) form a coiled coil.

This chain is Clathrin heavy chain linker domain-containing protein 1 (CLHC1), found in Macaca fascicularis (Crab-eating macaque).